The sequence spans 243 residues: Probable transcriptional regulator ycf27 (243 aa).

One can recognise a Response regulatory domain in the interval 7–120 (KILVVDDEAS…ELEARIRSVL (114 aa)). D56 is modified (4-aspartylphosphate). A DNA-binding region (H-T-H motif) is located at residues 76–94 (DVPIIMLTALGEVCDRITG). A DNA-binding region (ompR/PhoB-type) is located at residues 135–236 (SGIISIGFLK…ARGTGYLFQR (102 aa)).

It localises to the plastid. The protein resides in the chloroplast. Its function is as follows. Probable promoter-specific protein mediating the interaction between DNA and RNA polymerase. The polypeptide is Probable transcriptional regulator ycf27 (ycf27) (Pyropia yezoensis (Susabi-nori)).